Here is a 23-residue protein sequence, read N- to C-terminus: Cytochrome c3-1 (23 aa).

The interval 1-23 (AAPKAPADGLKMDKTKQXVVFNH) is disordered. Histidine 23 contributes to the heme binding site.

Binds 4 heme groups per subunit.

The protein resides in the periplasm. Functionally, participates in sulfate respiration coupled with phosphorylation by transferring electrons from the enzyme dehydrogenase to ferredoxin. This chain is Cytochrome c3-1, found in Nitratidesulfovibrio vulgaris (Desulfovibrio vulgaris).